The primary structure comprises 546 residues: uncharacterized protein (546 aa).

3 disordered regions span residues 37–101, 269–300, and 392–443; these read KEND…NQKL, QNKA…QPEV, and LSDL…TSAC. Composition is skewed to basic and acidic residues over residues 81–93 and 274–283; these read DDVK…ENNQ and ADLRKTESHG. The span at 284–298 shows a compositional bias: low complexity; sequence THSQSTPPQHSSSQP.

This is an uncharacterized protein from Homo sapiens (Human).